The primary structure comprises 398 residues: Acetylornithine aminotransferase (398 aa).

Phe129 serves as a coordination point for pyridoxal 5'-phosphate. Residue Arg132 coordinates N(2)-acetyl-L-ornithine. 214 to 217 provides a ligand contact to pyridoxal 5'-phosphate; it reads DEVQ. Lys243 is modified (N6-(pyridoxal phosphate)lysine). A N(2)-acetyl-L-ornithine-binding site is contributed by Ser271. Pyridoxal 5'-phosphate is bound at residue Thr272.

The protein belongs to the class-III pyridoxal-phosphate-dependent aminotransferase family. ArgD subfamily. Homodimer. It depends on pyridoxal 5'-phosphate as a cofactor.

The protein resides in the cytoplasm. It catalyses the reaction N(2)-acetyl-L-ornithine + 2-oxoglutarate = N-acetyl-L-glutamate 5-semialdehyde + L-glutamate. It participates in amino-acid biosynthesis; L-arginine biosynthesis; N(2)-acetyl-L-ornithine from L-glutamate: step 4/4. This is Acetylornithine aminotransferase from Neisseria meningitidis serogroup B (strain ATCC BAA-335 / MC58).